The chain runs to 847 residues: MIAYCGTTKMSDDIDWLHSRRGVCKVDLYSPEGQQDQDRKVICFVDVSTLNVEDDSKGAAGPRSDGELNLENLEEKEIIVIKDTEKQDQPKTEGSVCLFKQAPSDPISVLNWLLNDLQKYALGFQHALSPSASSCKHKVGDLEGDYHKIPSENCYSVYADQVNLDYLNKGPQNLRLEMAASKNTNNNQSPSNPATKSPSNQRSVATPDGECSMDDLSYYVNRLSSLVIQMARKEIKDKLEGGNKCLHHSMYTSGEKGKTSPRSAVSKIASEMAHEAVELTSSEMRGNGEEGRDGRKTFLYSELSNKNKCGEKQQMCPKDSKEFADSISKGLMVYANQVASDMMVSVMKTLKVHSCGKPIPACVVLKRVLLKHTKEIVSDLIDSCMKNLHNITGVLMTDSDFVSAVKRNLFNHGKQNAADIMEAMLKRLVSALLGEKKETKSQSLAYATLKAGTHDPKCKNQSLEFSAMKAEMKGKDKGKTKGDPCCKSLTSAERVSEHILKESLTMWNNQKQGTQGRVPNKVCPSKDEKREKISPSTDSLAKDLIVSALMLIQYHLTQQAKGKDPCEEECPGSSMGYMSQSAQYEKSGGGQSSKSLSMKHFESRGAPGPSTCAKENQLESQKMDMSNMVLSLIQKLLSESPFSCDELSESENKRCCDSRSKQAAPVAKRPEDQSQDSTEMDFISGMKQMNRQFIDQLVESVMKLCLIMAKYSNNGAALAELEEQAALASNGPRCGREAVMSQSYLETPGPEVIVNNQCSTSNLQKQLQAVLQWIAASQFNVPMLYFMGDDDGQLEKLPEVSAKAAEKGYSVGDLLQEVMKFAKERQLDEAVGNMARKQLLDWLLANL.

A propeptide spanning residues 1 to 187 (MIAYCGTTKM…MAASKNTNNN (187 aa)) is cleaved from the precursor. Residues S95, S129, S189, and S203 each carry the phosphoserine modification. Residues 182 to 204 (KNTNNNQSPSNPATKSPSNQRSV) show a composition bias toward polar residues. Residues 182 to 209 (KNTNNNQSPSNPATKSPSNQRSVATPDG) are disordered. At T206 the chain carries Phosphothreonine. 3 positions are modified to phosphoserine: S212, S225, and S270. An interaction with Prkar1a and Prkar2a region spans residues 218–231 (YYVNRLSSLVIQMA). Y300 bears the Phosphotyrosine mark. Phosphoserine is present on residues S301, S304, S340, S430, S441, S443, S462, S491, S496, and S503. A PKA-RI subunit binding domain region spans residues 334–343 (YANQVASDMM). T505 is subject to Phosphothreonine. The tract at residues 511 to 536 (KQGTQGRVPNKVCPSKDEKREKISPS) is disordered. Residues 524 to 533 (PSKDEKREKI) show a composition bias toward basic and acidic residues. Phosphoserine is present on residues S536 and S581. The tract at residues 583–613 (QYEKSGGGQSSKSLSMKHFESRGAPGPSTCA) is disordered. Phosphoserine is present on residues S626, S631, S648, S650, S674, S677, S700, and S729. Positions 655–677 (CCDSRSKQAAPVAKRPEDQSQDS) are disordered.

It belongs to the AKAP110 family. As to quaternary structure, interacts with PRKAR1A and PRKAR2A. Interacts with ENO4. Interacts with QRICH2. Post-translationally, phosphorylated by STK33 during sperm flagella assembly. Expressed in flagella of epididymal sperm.

The protein localises to the cell projection. Its subcellular location is the cilium. It localises to the flagellum. In terms of biological role, major structural component of sperm fibrous sheath. May play a role in sperm motility. This Rattus norvegicus (Rat) protein is A-kinase anchor protein 4.